We begin with the raw amino-acid sequence, 393 residues long: S-adenosylmethionine synthase (393 aa).

Glu-9 provides a ligand contact to Mg(2+). His-15 lines the ATP pocket. Glu-43 contacts K(+). L-methionine is bound by residues Glu-56 and Gln-99. Residues 167–169, 235–238, Asp-246, 252–253, Ala-269, Lys-273, and Lys-277 each bind ATP; these read DGK, SGRF, and RK. Asp-246 lines the L-methionine pocket. Lys-277 lines the L-methionine pocket.

It belongs to the AdoMet synthase family. As to quaternary structure, homotetramer. It depends on Mn(2+) as a cofactor. Mg(2+) is required as a cofactor. Co(2+) serves as cofactor. Requires K(+) as cofactor.

It localises to the cytoplasm. It carries out the reaction L-methionine + ATP + H2O = S-adenosyl-L-methionine + phosphate + diphosphate. The protein operates within amino-acid biosynthesis; S-adenosyl-L-methionine biosynthesis; S-adenosyl-L-methionine from L-methionine: step 1/1. In terms of biological role, catalyzes the formation of S-adenosylmethionine from methionine and ATP. The reaction comprises two steps that are both catalyzed by the same enzyme: formation of S-adenosylmethionine (AdoMet) and triphosphate, and subsequent hydrolysis of the triphosphate. This chain is S-adenosylmethionine synthase (SAMS), found in Gossypium hirsutum (Upland cotton).